Consider the following 704-residue polypeptide: Transmembrane protein DDB_G0274347 (704 aa).

The segment at 37–145 (VEQRDEVNDE…NNYNNNNTPT (109 aa)) is disordered. Over residues 43–67 (VNDEFQEEEEELEDDDDDEDDEDEI) the composition is skewed to acidic residues. A compositionally biased stretch (basic and acidic residues) spans 85-99 (HNDKEKEKKKDKQEE). Positions 100–113 (YIDSDDDDDDDGDE) are enriched in acidic residues. Low complexity predominate over residues 114-142 (NYYLNNNNNNNNNINNNNNYNNNNYNNNN). An N-linked (GlcNAc...) asparagine glycan is attached at N166. Residues 255–275 (ALISMALLISLVAIIFYLPLP) form a helical membrane-spanning segment. N354 is a glycosylation site (N-linked (GlcNAc...) asparagine). Transmembrane regions (helical) follow at residues 370-390 (LKIF…WLFA), 414-434 (TLLV…LYFI), and 513-533 (LVSF…FLIS). Over residues 550-565 (TTTTTINTTTNTTSNT) the composition is skewed to low complexity. The interval 550 to 576 (TTTTTINTTTNTTSNTSQQSNPLSKRL) is disordered. 3 N-linked (GlcNAc...) asparagine glycosylation sites follow: N556, N560, and N564. Residues 566-576 (SQQSNPLSKRL) show a composition bias toward polar residues. The next 2 membrane-spanning stretches (helical) occupy residues 609–629 (FIIV…GVPP) and 638–658 (IFFI…LIII).

It localises to the membrane. The protein is Transmembrane protein DDB_G0274347 of Dictyostelium discoideum (Social amoeba).